The chain runs to 164 residues: Ribonuclease P protein component 2 (164 aa).

This sequence belongs to the eukaryotic/archaeal RNase P protein component 2 family. Consists of a catalytic RNA component and at least 4-5 protein subunits.

The protein resides in the cytoplasm. The enzyme catalyses Endonucleolytic cleavage of RNA, removing 5'-extranucleotides from tRNA precursor.. Part of ribonuclease P, a protein complex that generates mature tRNA molecules by cleaving their 5'-ends. The protein is Ribonuclease P protein component 2 of Halobacterium salinarum (strain ATCC 29341 / DSM 671 / R1).